The sequence spans 1325 residues: Zinc finger MYM-type protein 6 (1325 aa).

MYM-type zinc fingers lie at residues 113-151 (QLFC…PKDV), 163-206 (KDFC…RFEV), 213-248 (HGLC…SSGP), 296-334 (ELFC…QYHL), 342-443 (YSFC…KPEL), 451-485 (FLFC…KETV), 492-531 (KPFC…LVEN), and 538-572 (EEFC…SESI). A Phosphoserine modification is found at S397. Residues 665 to 733 (ESTQEDAMKF…NDAELDSPPS (69 aa)) are disordered. Residues 695-706 (PVTQTKATSCKP) are compositionally biased toward polar residues.

As to expression, expressed at high levels in heart, skeletal muscle, kidney and liver.

The protein localises to the nucleus. Functionally, plays a role in the regulation of cell morphology and cytoskeletal organization. In Homo sapiens (Human), this protein is Zinc finger MYM-type protein 6 (ZMYM6).